Consider the following 380-residue polypeptide: Cytochrome b (380 aa).

The next 4 membrane-spanning stretches (helical) occupy residues 34–54, 78–99, 114–134, and 179–199; these read FGSL…LLAM, WLIR…YLHI, WNTG…GYVL, and FFAL…IHLT. Residues His-84 and His-98 each contribute to the heme b site. Residues His-183 and His-197 each contribute to the heme b site. Residue His-202 participates in a ubiquinone binding. The next 4 helical transmembrane spans lie at 227–247, 289–309, 321–341, and 348–368; these read TKDI…ALFS, LGGV…PLLH, LSQL…WIGS, and FIII…ILFP.

It belongs to the cytochrome b family. In terms of assembly, the cytochrome bc1 complex contains 11 subunits: 3 respiratory subunits (MT-CYB, CYC1 and UQCRFS1), 2 core proteins (UQCRC1 and UQCRC2) and 6 low-molecular weight proteins (UQCRH/QCR6, UQCRB/QCR7, UQCRQ/QCR8, UQCR10/QCR9, UQCR11/QCR10 and a cleavage product of UQCRFS1). This cytochrome bc1 complex then forms a dimer. It depends on heme b as a cofactor.

It localises to the mitochondrion inner membrane. Its function is as follows. Component of the ubiquinol-cytochrome c reductase complex (complex III or cytochrome b-c1 complex) that is part of the mitochondrial respiratory chain. The b-c1 complex mediates electron transfer from ubiquinol to cytochrome c. Contributes to the generation of a proton gradient across the mitochondrial membrane that is then used for ATP synthesis. This Pygoscelis antarcticus (Chinstrap penguin) protein is Cytochrome b (MT-CYB).